The chain runs to 365 residues: Aminomethyltransferase (365 aa).

The protein belongs to the GcvT family. The glycine cleavage system is composed of four proteins: P, T, L and H.

It catalyses the reaction N(6)-[(R)-S(8)-aminomethyldihydrolipoyl]-L-lysyl-[protein] + (6S)-5,6,7,8-tetrahydrofolate = N(6)-[(R)-dihydrolipoyl]-L-lysyl-[protein] + (6R)-5,10-methylene-5,6,7,8-tetrahydrofolate + NH4(+). Functionally, the glycine cleavage system catalyzes the degradation of glycine. The sequence is that of Aminomethyltransferase from Chlorobaculum tepidum (strain ATCC 49652 / DSM 12025 / NBRC 103806 / TLS) (Chlorobium tepidum).